Here is a 56-residue protein sequence, read N- to C-terminus: AGLYKPPNNIESENEVYTGNICFLPLEVGVCRALFFRYGYDPAIKACXEFMYGGCQ.

A BPTI/Kunitz inhibitor domain is found at 22–56; sequence CFLPLEVGVCRALFFRYGYDPAIKACXEFMYGGCQ. A disulfide bridge links Cys-31 with Cys-55.

Functionally, inhibits trypsin. This chain is Hemolymph trypsin inhibitor A, found in Manduca sexta (Tobacco hawkmoth).